The chain runs to 344 residues: Meiotic recombination protein DMC1 homolog B (344 aa).

Residue 133–140 (GEFRSGKT) coordinates ATP. Arginine 235 is a binding site for dsDNA. 5 residues coordinate ssDNA: arginine 235, phenylalanine 238, arginine 241, arginine 247, and arginine 315. Positions 241 and 247 each coordinate dsDNA.

Belongs to the RecA family. DMC1 subfamily. As to expression, highly expressed in spikelets. Expressed in meiotic young panicles.

It is found in the nucleus. Recombinase that may participate in meiotic recombination, specifically in homologous strand assimilation, which is required for the resolution of meiotic double-strand breaks. Exhibits DNA-dependent ATPase activity when bound to single-stranded DNA (ssDNA). Mediates renaturation of homologous complementary strands as well as assimilation of single strands into homologous supercoiled duplexes leading to D-loop formation. Binds circular single-stranded DNA (ssDNA) and circular double-stranded DNA (dsDNA) in vitro. Catalyzes DNA homologous renaturation and DNA strand exchange. The rates of these activities are dependent on the state of ATP hydrolysis. Forms helical filaments along ssDNA and dsDNA, and promotes strand exchange between ssDNA and dsDNA with long DNA substrates of several thousand base pairs. The presence of the replication protein A is not required for this activity. Seems to be required for homologous pairing and subsequent chromosome segregation during male meiosis. May be not directly required for homologous pairing during male meiosis. Required for synaptonemal complex assembly and crossover formation. Functions redundantly with DMC1A. This Oryza sativa subsp. japonica (Rice) protein is Meiotic recombination protein DMC1 homolog B.